The following is a 303-amino-acid chain: MRLRHVVSSLDLTRDDYFRIFELADKFSNVKKLNYLSGKVVSLAFFEPSTRTAQSFHTAAIKLGADVIGFASEESTSIAKGENLADTIRMLNNYSNCIVMRHKFDGAALFASEISDIPIINAGDGKHEHPTQALIDLYTIYKVFGEIDGRTFGLLGDLKYARTVNSLLRALTRFKPKKIFLISPSQLKVRREILDGLNYPVIETENPYDVIQDIDVLYVTRIQKERFVDELEYEKVKESYVVDLKLVNMMKKDGIILHPLPRVTEIDRKVDKTTNAKYFYQASLAVPVRMALFYEVLGERKDD.

Carbamoyl phosphate contacts are provided by Arg-51 and Thr-52. Lys-80 contributes to the L-aspartate binding site. Carbamoyl phosphate-binding residues include Arg-101, His-129, and Gln-132. Arg-162 and Arg-221 together coordinate L-aspartate. Positions 260 and 261 each coordinate carbamoyl phosphate.

The protein belongs to the aspartate/ornithine carbamoyltransferase superfamily. ATCase family. In terms of assembly, heterooligomer of catalytic and regulatory chains.

It catalyses the reaction carbamoyl phosphate + L-aspartate = N-carbamoyl-L-aspartate + phosphate + H(+). It functions in the pathway pyrimidine metabolism; UMP biosynthesis via de novo pathway; (S)-dihydroorotate from bicarbonate: step 2/3. Functionally, catalyzes the condensation of carbamoyl phosphate and aspartate to form carbamoyl aspartate and inorganic phosphate, the committed step in the de novo pyrimidine nucleotide biosynthesis pathway. In Saccharolobus islandicus (strain M.14.25 / Kamchatka #1) (Sulfolobus islandicus), this protein is Aspartate carbamoyltransferase catalytic subunit.